The chain runs to 232 residues: 5'-methylthioadenosine/S-adenosylhomocysteine nucleosidase (232 aa).

Glu12 (proton acceptor) is an active-site residue. Substrate is bound by residues Gly78, Ile152, and 173–174 (ME). Catalysis depends on Asp197, which acts as the Proton donor.

It belongs to the PNP/UDP phosphorylase family. MtnN subfamily. In terms of assembly, homodimer.

The enzyme catalyses S-adenosyl-L-homocysteine + H2O = S-(5-deoxy-D-ribos-5-yl)-L-homocysteine + adenine. It carries out the reaction S-methyl-5'-thioadenosine + H2O = 5-(methylsulfanyl)-D-ribose + adenine. It catalyses the reaction 5'-deoxyadenosine + H2O = 5-deoxy-D-ribose + adenine. It functions in the pathway amino-acid biosynthesis; L-methionine biosynthesis via salvage pathway; S-methyl-5-thio-alpha-D-ribose 1-phosphate from S-methyl-5'-thioadenosine (hydrolase route): step 1/2. Catalyzes the irreversible cleavage of the glycosidic bond in both 5'-methylthioadenosine (MTA) and S-adenosylhomocysteine (SAH/AdoHcy) to adenine and the corresponding thioribose, 5'-methylthioribose and S-ribosylhomocysteine, respectively. Also cleaves 5'-deoxyadenosine, a toxic by-product of radical S-adenosylmethionine (SAM) enzymes, into 5-deoxyribose and adenine. Thus, is required for in vivo function of the radical SAM enzymes biotin synthase and lipoic acid synthase, that are inhibited by 5'-deoxyadenosine accumulation. This chain is 5'-methylthioadenosine/S-adenosylhomocysteine nucleosidase, found in Escherichia coli O7:K1 (strain IAI39 / ExPEC).